The following is a 292-amino-acid chain: NIF3-like protein 1 (292 aa).

Belongs to the GTP cyclohydrolase I type 2/NIF3 family.

This is NIF3-like protein 1 (anon-35F/36A) from Drosophila melanogaster (Fruit fly).